The sequence spans 347 residues: Aspartate-semialdehyde dehydrogenase (347 aa).

NADP(+) is bound by residues T13–V16 and R41–S42. Residue R101 coordinates phosphate. C132 (acyl-thioester intermediate) is an active-site residue. Residue Q159 coordinates substrate. An NADP(+)-binding site is contributed by S162–G163. K216 is a phosphate binding site. R238 contributes to the substrate binding site. H245 functions as the Proton acceptor in the catalytic mechanism. NADP(+) is bound at residue N319.

The protein belongs to the aspartate-semialdehyde dehydrogenase family. As to quaternary structure, homodimer.

The catalysed reaction is L-aspartate 4-semialdehyde + phosphate + NADP(+) = 4-phospho-L-aspartate + NADPH + H(+). Its pathway is amino-acid biosynthesis; L-lysine biosynthesis via DAP pathway; (S)-tetrahydrodipicolinate from L-aspartate: step 2/4. The protein operates within amino-acid biosynthesis; L-methionine biosynthesis via de novo pathway; L-homoserine from L-aspartate: step 2/3. It participates in amino-acid biosynthesis; L-threonine biosynthesis; L-threonine from L-aspartate: step 2/5. In terms of biological role, catalyzes the NADPH-dependent formation of L-aspartate-semialdehyde (L-ASA) by the reductive dephosphorylation of L-aspartyl-4-phosphate. The protein is Aspartate-semialdehyde dehydrogenase of Legionella pneumophila.